The following is a 1888-amino-acid chain: Nuclear pore membrane glycoprotein 210-like (1888 aa).

Positions Met1 to Leu35 are cleaved as a signal peptide. Asn84, Asn304, Asn348, Asn495, Asn522, Asn812, and Asn931 each carry an N-linked (GlcNAc...) asparagine glycan. A BIG2 domain is found at Phe1082–Gly1154. A glycan (N-linked (GlcNAc...) asparagine) is linked at Asn1445. Residues Ile1813–Asn1833 traverse the membrane as a helical segment. A glycan (N-linked (GlcNAc...) asparagine) is linked at Asn1859.

It belongs to the NUP210 family.

Its subcellular location is the nucleus membrane. This is Nuclear pore membrane glycoprotein 210-like (NUP210L) from Homo sapiens (Human).